The sequence spans 217 residues: Ribose-5-phosphate isomerase A (217 aa).

Substrate is bound by residues 28–31 (TGST), 81–84 (DGAD), and 94–97 (KGGG). Catalysis depends on Glu-103, which acts as the Proton acceptor. Position 121 (Lys-121) interacts with substrate.

The protein belongs to the ribose 5-phosphate isomerase family. As to quaternary structure, homodimer.

The enzyme catalyses aldehydo-D-ribose 5-phosphate = D-ribulose 5-phosphate. The protein operates within carbohydrate degradation; pentose phosphate pathway; D-ribose 5-phosphate from D-ribulose 5-phosphate (non-oxidative stage): step 1/1. In terms of biological role, catalyzes the reversible conversion of ribose-5-phosphate to ribulose 5-phosphate. The sequence is that of Ribose-5-phosphate isomerase A from Aeromonas salmonicida (strain A449).